A 71-amino-acid polypeptide reads, in one-letter code: Translational regulator CsrA (71 aa).

This sequence belongs to the CsrA/RsmA family. In terms of assembly, homodimer; the beta-strands of each monomer intercalate to form a hydrophobic core, while the alpha-helices form wings that extend away from the core.

It localises to the cytoplasm. In terms of biological role, a key translational regulator that binds mRNA to regulate translation initiation and/or mRNA stability. Mediates global changes in gene expression, shifting from rapid growth to stress survival by linking envelope stress, the stringent response and the catabolite repression systems. Usually binds in the 5'-UTR; binding at or near the Shine-Dalgarno sequence prevents ribosome-binding, repressing translation, binding elsewhere in the 5'-UTR can activate translation and/or stabilize the mRNA. Its function is antagonized by small RNA(s). This chain is Translational regulator CsrA, found in Pseudoalteromonas atlantica (strain T6c / ATCC BAA-1087).